The chain runs to 230 residues: Heptaprenylglyceryl phosphate synthase (230 aa).

Lys-12 is a binding site for sn-glycerol 1-phosphate. Residues Asp-14 and Thr-40 each coordinate Mg(2+). Residues 159 to 164, Gly-189, and 209 to 210 contribute to the sn-glycerol 1-phosphate site; these read YIEYSG and GD.

This sequence belongs to the GGGP/HepGP synthase family. Group I subfamily. Homodimer. Mg(2+) serves as cofactor.

It catalyses the reaction sn-glycerol 1-phosphate + all-trans-heptaprenyl diphosphate = 3-heptaprenyl-sn-glycero-1-phosphate + diphosphate. Its pathway is membrane lipid metabolism; glycerophospholipid metabolism. Prenyltransferase that catalyzes in vivo the transfer of the heptaprenyl moiety of heptaprenyl pyrophosphate (HepPP; 35 carbon atoms) to the C3 hydroxyl of sn-glycerol-1-phosphate (G1P), producing heptaprenylglyceryl phosphate (HepGP). This reaction is an ether-bond-formation step in the biosynthesis of archaea-type G1P-based membrane lipids found in Bacillales. The sequence is that of Heptaprenylglyceryl phosphate synthase from Staphylococcus aureus (strain JH1).